The following is a 228-amino-acid chain: Auxin-responsive protein IAA16 (228 aa).

Positions 19-23 match the EAR-like (transcriptional repression) motif; that stretch reads LSLAL. Positions 28 to 39 are enriched in polar residues; the sequence is SSSGLQGNTSTA. 2 disordered regions span residues 28–57 and 70–90; these read SSSG…PAAP and NLAS…AAAA. One can recognise a PB1 domain in the interval 97–214; sequence ARFVKVNMDG…RVLRSSDLNA (118 aa).

It belongs to the Aux/IAA family. In terms of assembly, homodimers and heterodimers. Expressed in roots, flowers and seedlings.

The protein resides in the nucleus. Functionally, aux/IAA proteins are short-lived transcriptional factors that function as repressors of early auxin response genes at low auxin concentrations. In Oryza sativa subsp. japonica (Rice), this protein is Auxin-responsive protein IAA16 (IAA16).